Here is a 303-residue protein sequence, read N- to C-terminus: D-alanine--D-alanine ligase (303 aa).

Residues 100–295 (KQLLRRHGIL…FPALIARLIE (196 aa)) enclose the ATP-grasp domain. 127 to 180 (GLGYPLFVKPNTGGSSLCLSRVTQPEGLAPALEAVFAHCGEAIVEPAIPGVEVT) is a binding site for ATP. Residues Asp249, Glu262, and Asn264 each contribute to the Mg(2+) site.

This sequence belongs to the D-alanine--D-alanine ligase family. The cofactor is Mg(2+). Mn(2+) is required as a cofactor.

It localises to the cytoplasm. The catalysed reaction is 2 D-alanine + ATP = D-alanyl-D-alanine + ADP + phosphate + H(+). It functions in the pathway cell wall biogenesis; peptidoglycan biosynthesis. In terms of biological role, cell wall formation. The polypeptide is D-alanine--D-alanine ligase (Nitratidesulfovibrio vulgaris (strain DP4) (Desulfovibrio vulgaris)).